The primary structure comprises 254 residues: Guanylate kinase (254 aa).

The region spanning 64–243 is the Guanylate kinase-like domain; that stretch reads KHLVVLAGPT…AAREVVDLMM (180 aa). Residue 71 to 78 participates in ATP binding; the sequence is GPTAVGKG.

It belongs to the guanylate kinase family.

It is found in the cytoplasm. It catalyses the reaction GMP + ATP = GDP + ADP. Functionally, essential for recycling GMP and indirectly, cGMP. The sequence is that of Guanylate kinase from Leifsonia xyli subsp. xyli (strain CTCB07).